The following is a 244-amino-acid chain: Phosphoadenosine 5'-phosphosulfate reductase (244 aa).

Catalysis depends on cysteine 239, which acts as the Nucleophile; cysteine thiosulfonate intermediate.

It belongs to the PAPS reductase family. CysH subfamily.

Its subcellular location is the cytoplasm. It carries out the reaction [thioredoxin]-disulfide + sulfite + adenosine 3',5'-bisphosphate + 2 H(+) = [thioredoxin]-dithiol + 3'-phosphoadenylyl sulfate. It participates in sulfur metabolism; hydrogen sulfide biosynthesis; sulfite from sulfate: step 3/3. Catalyzes the formation of sulfite from phosphoadenosine 5'-phosphosulfate (PAPS) using thioredoxin as an electron donor. This is Phosphoadenosine 5'-phosphosulfate reductase from Shigella dysenteriae serotype 1 (strain Sd197).